A 47-amino-acid chain; its full sequence is uncharacterized protein (47 aa).

The disordered stretch occupies residues 19–47 (EKVLKNQNPDRLSHMTDKNAQPKSKEKEE).

This is an uncharacterized protein from Bacillus subtilis (strain 168).